The following is a 482-amino-acid chain: Cardiolipin synthase (482 aa).

Transmembrane regions (helical) follow at residues 4 to 24 and 34 to 54; these read LAYL…VTVF and WAWL…YLIF. PLD phosphodiesterase domains lie at 217–244 and 395–422; these read LNYR…GDEY and DNGF…DFRS. Catalysis depends on residues His-222, Lys-224, Asp-229, His-400, Lys-402, and Asp-407.

It belongs to the phospholipase D family. Cardiolipin synthase subfamily.

The protein localises to the cell membrane. The enzyme catalyses 2 a 1,2-diacyl-sn-glycero-3-phospho-(1'-sn-glycerol) = a cardiolipin + glycerol. In terms of biological role, catalyzes the reversible phosphatidyl group transfer from one phosphatidylglycerol molecule to another to form cardiolipin (CL) (diphosphatidylglycerol) and glycerol. In Listeria monocytogenes serotype 4b (strain CLIP80459), this protein is Cardiolipin synthase (cls).